The sequence spans 177 residues: Adenine phosphoribosyltransferase (177 aa).

It belongs to the purine/pyrimidine phosphoribosyltransferase family. Homodimer.

The protein localises to the cytoplasm. It carries out the reaction AMP + diphosphate = 5-phospho-alpha-D-ribose 1-diphosphate + adenine. The protein operates within purine metabolism; AMP biosynthesis via salvage pathway; AMP from adenine: step 1/1. Catalyzes a salvage reaction resulting in the formation of AMP, that is energically less costly than de novo synthesis. This is Adenine phosphoribosyltransferase from Mycobacteroides abscessus (strain ATCC 19977 / DSM 44196 / CCUG 20993 / CIP 104536 / JCM 13569 / NCTC 13031 / TMC 1543 / L948) (Mycobacterium abscessus).